We begin with the raw amino-acid sequence, 362 residues long: 3-dehydroquinate synthase (362 aa).

Belongs to the archaeal-type DHQ synthase family.

The enzyme catalyses 2-amino-2,3,7-trideoxy-D-lyxo-hept-6-ulosonate + NAD(+) + H2O = 3-dehydroquinate + NH4(+) + NADH + H(+). Its function is as follows. Catalyzes the oxidative deamination and cyclization of 2-amino-3,7-dideoxy-D-threo-hept-6-ulosonic acid (ADH) to yield 3-dehydroquinate (DHQ), which is fed into the canonical shikimic pathway of aromatic amino acid biosynthesis. This is 3-dehydroquinate synthase from Methanothrix thermoacetophila (strain DSM 6194 / JCM 14653 / NBRC 101360 / PT) (Methanosaeta thermophila).